Reading from the N-terminus, the 874-residue chain is ATP-dependent RNA helicase DDX54 (874 aa).

The interval methionine 1–valine 76 is disordered. Positions tryptophan 20–threonine 30 are enriched in basic residues. Residue threonine 30 is modified to Phosphothreonine. Phosphoserine is present on residues serine 33, serine 38, serine 40, and serine 74. Residues aspartate 39–glutamate 50 show a composition bias toward acidic residues. Residues glycine 95–arginine 123 carry the Q motif motif. The Helicase ATP-binding domain maps to isoleucine 126 to isoleucine 298. Alanine 139 to threonine 146 contacts ATP. Positions aspartate 246–aspartate 249 match the DEAD box motif. The Helicase C-terminal domain occupies tyrosine 328–alanine 472. Residues alanine 581 to methionine 590 are compositionally biased toward polar residues. Residues alanine 581–leucine 687 are disordered. Residues threonine 636 to valine 645 are compositionally biased toward low complexity. Basic and acidic residues predominate over residues glutamate 664 to arginine 685. Phosphoserine occurs at positions 688 and 690. The disordered stretch occupies residues alanine 712–methionine 874. The span at glutamine 713–leucine 722 shows a compositional bias: polar residues. Composition is skewed to basic and acidic residues over residues glutamine 737–serine 747 and tyrosine 755–aspartate 771. Phosphoserine occurs at positions 774 and 780. The segment covering methionine 812–leucine 823 has biased composition (basic and acidic residues). The segment covering proline 864–methionine 874 has biased composition (basic residues).

It belongs to the DEAD box helicase family. DDX54/DBP10 subfamily. In terms of assembly, interacts in a hormone-dependent manner with nuclear receptors.

Its subcellular location is the nucleus. The protein localises to the nucleolus. It catalyses the reaction ATP + H2O = ADP + phosphate + H(+). In terms of biological role, has RNA-dependent ATPase activity. Represses the transcriptional activity of nuclear receptors. In Mus musculus (Mouse), this protein is ATP-dependent RNA helicase DDX54 (Ddx54).